The chain runs to 80 residues: MASKKPENMSFESTIEELEQLVEQLESGDLALDEALRKFERGISLARAGQLKLDDAEQRVRILLSNSDDAPLSDFSDVAE.

The protein belongs to the XseB family. In terms of assembly, heterooligomer composed of large and small subunits.

It is found in the cytoplasm. It carries out the reaction Exonucleolytic cleavage in either 5'- to 3'- or 3'- to 5'-direction to yield nucleoside 5'-phosphates.. Its function is as follows. Bidirectionally degrades single-stranded DNA into large acid-insoluble oligonucleotides, which are then degraded further into small acid-soluble oligonucleotides. The chain is Exodeoxyribonuclease 7 small subunit from Vibrio cholerae serotype O1 (strain ATCC 39541 / Classical Ogawa 395 / O395).